The sequence spans 333 residues: Casein kinase II subunit beta-1 (333 aa).

A compositionally biased stretch (acidic residues) spans 58–78 (VEPEDDDDEEEEDEEDEEDMS). Disordered regions lie at residues 58-92 (VEPE…ERRH) and 282-333 (ARRY…ESEL). Residues 305–316 (ASRRRGPPRRQK) show a composition bias toward basic residues.

The protein belongs to the casein kinase 2 subunit beta family. Tetramer composed of two alpha chains, one beta chain and one beta' chain. Post-translationally, phosphorylated by alpha subunit.

In terms of biological role, regulatory subunit of casein kinase II/CK2. As part of the kinase complex regulates the basal catalytic activity of the alpha subunit a constitutively active serine/threonine-protein kinase that phosphorylates a large number of substrates containing acidic residues C-terminal to the phosphorylated serine or threonine. The chain is Casein kinase II subunit beta-1 (ckb-1) from Neurospora crassa (strain ATCC 24698 / 74-OR23-1A / CBS 708.71 / DSM 1257 / FGSC 987).